Consider the following 441-residue polypeptide: Arginine biosynthesis bifunctional protein ArgJ, mitochondrial (441 aa).

Substrate-binding residues include Thr-177, Lys-204, Thr-215, Glu-301, Asn-436, and Ser-441. Thr-215 serves as the catalytic Nucleophile.

This sequence belongs to the ArgJ family. As to quaternary structure, heterodimer of an alpha and a beta chain. Post-translationally, the alpha and beta chains are autoproteolytically processed from a single precursor protein within the mitochondrion.

It is found in the mitochondrion matrix. The catalysed reaction is N(2)-acetyl-L-ornithine + L-glutamate = N-acetyl-L-glutamate + L-ornithine. It carries out the reaction L-glutamate + acetyl-CoA = N-acetyl-L-glutamate + CoA + H(+). It functions in the pathway amino-acid biosynthesis; L-arginine biosynthesis; L-ornithine and N-acetyl-L-glutamate from L-glutamate and N(2)-acetyl-L-ornithine (cyclic): step 1/1. The protein operates within amino-acid biosynthesis; L-arginine biosynthesis; N(2)-acetyl-L-ornithine from L-glutamate: step 1/4. Functionally, catalyzes two activities which are involved in the cyclic version of arginine biosynthesis: the synthesis of acetylglutamate from glutamate and acetyl-CoA, and of ornithine by transacetylation between acetylornithine and glutamate. The protein is Arginine biosynthesis bifunctional protein ArgJ, mitochondrial of Candida glabrata (strain ATCC 2001 / BCRC 20586 / JCM 3761 / NBRC 0622 / NRRL Y-65 / CBS 138) (Yeast).